A 1004-amino-acid polypeptide reads, in one-letter code: MGMRPAARMPSLTQRSRFLIAVSAVLVLLLLLGPRFIDTYVDWLWFGELGYRSVFTTQIITRLVIFFVVAILVGAVVFAGLALAYRTRPVFVPTAGPNDPIARYRTAVMARLRLIGIGVPLAIGVLAGFVGQSYWQRVQLFLHGGDFGVSDPQFGIDLGFYAFDLPFYRLVLTYLFVGVFLAFLANLLGHYLFGGIRLAGRSGALSRAARIQLITLVGLLMLLKAVAYWFDRYELLSHTRGGKPFTGAGYTDINAVLPAKLILMAIAVICAVAVFSAIFLRDLRIPAIGVVLLLLSSLVVGAGWPLVVEQISVRPNAAQKESEYISRSITATRQAYGLTEESVTYRDYPGNASATAQQVAADRATTSNIRVLDPNIVAPAFTQFQQGKNFYFFPDQLNMDRYRDDSGNLRDYVVAARELNPDRLIDNQRDWINRHTVFTHGNGFIASPANTVRGIANDPNQNGGYPEFLASVVGANGEVSSPGPAPLAQPRIYFGPVIASAADDYAIVGESGTPREYDYETNTDTRNYTYTGSGGVPIGNWLTRSVFAAKYAERNFLFSNVINENSKILFNRDPADRVEAVAPWLTTDTTVYPAIVNERIVWIVDGYTTLDNYPYSELSTLSSVTTDSNEVAQNRLQLDKQVSYIRNSVKATVDAYDGTVTLYAQDEQDPVLQAWMKVFPDSVKPKSDITPELQEHLRYPEDLFKVQRALLAKYHVDDPVTFFSTSDFWDVPLDPNPTASSYQPPYYIVAKDLAENNGSASFQLTSAMNRFRRDFLAAYISASSDPETYGRLTVLTVPGQVNGPKLAFNAISTDTAISTELGQIGRDGQNRIRWGNLLTLPMGDGGLLYVAPIYASPGNTDAASTYPRLIRVAMMYNDQIGYGPTVRDALTDLFGPGADATATGPAATEPPAGQAPQTQGNNTAPPAAQPPNRQGQAPAGRPEVPVAVPPTGPTQLSAAKSAALQDVNAALDALRGAQESGDFAQYGEALQRLDDAVNKYQETD.

The next 7 helical transmembrane spans lie at 18–38 (FLIA…RFID), 63–83 (LVIF…GLAL), 114–134 (LIGI…GQSY), 176–196 (FVGV…FGGI), 211–231 (IQLI…YWFD), 260–280 (KLIL…AIFL), and 288–308 (IGVV…PLVV). Positions 896–940 (PGADATATGPAATEPPAGQAPQTQGNNTAPPAAQPPNRQGQAPAG) are enriched in low complexity. The segment at 896–960 (PGADATATGP…TGPTQLSAAK (65 aa)) is disordered.

The protein belongs to the UPF0182 family.

The protein resides in the cell membrane. The chain is UPF0182 protein Mflv_4654 from Mycolicibacterium gilvum (strain PYR-GCK) (Mycobacterium gilvum (strain PYR-GCK)).